Reading from the N-terminus, the 88-residue chain is Small ribosomal subunit protein uS15 (88 aa).

Belongs to the universal ribosomal protein uS15 family. Part of the 30S ribosomal subunit. Forms a bridge to the 50S subunit in the 70S ribosome, contacting the 23S rRNA.

One of the primary rRNA binding proteins, it binds directly to 16S rRNA where it helps nucleate assembly of the platform of the 30S subunit by binding and bridging several RNA helices of the 16S rRNA. In terms of biological role, forms an intersubunit bridge (bridge B4) with the 23S rRNA of the 50S subunit in the ribosome. The chain is Small ribosomal subunit protein uS15 from Polaromonas sp. (strain JS666 / ATCC BAA-500).